A 297-amino-acid chain; its full sequence is Halorhodopsin (297 aa).

The interval 1 to 31 (MRSRTYHDQSVCGPYGSQRTDCDRDTDAGSD) is disordered. The Extracellular portion of the chain corresponds to 1-45 (MRSRTYHDQSVCGPYGSQRTDCDRDTDAGSDTDVHGAQVATQIRT). A helical membrane pass occupies residues 46-71 (DTLLHSSLWVNIALAGLSILVFLYMA). Over 72–77 (RTVRAN) the chain is Cytoplasmic. Residues 78–101 (RARLIVGATLMIPLVSLSSYLGLV) traverse the membrane as a helical segment. At 102 to 125 (TGLTAGPIEMPAAHALAGEDVLSQ) the chain is on the extracellular side. A helical membrane pass occupies residues 126 to 147 (WGRYLTWTLSTPMILLALGWLA). Topologically, residues 148 to 150 (EVD) are cytoplasmic. A helical membrane pass occupies residues 151 to 174 (TADLFVVIAADIGMCLTGLAAALT). The Extracellular portion of the chain corresponds to 175-177 (TSS). Residues 178–200 (YAFRWAFYLVSTAFFVVVLYALL) traverse the membrane as a helical segment. The Cytoplasmic portion of the chain corresponds to 201 to 212 (AKWPTNAEAAGT). Residues 213–236 (GDIFGTLRWLTVILWLGYPILWAL) form a helical membrane-spanning segment. Residues 237–246 (GVEGFALVDS) lie on the Extracellular side of the membrane. The helical transmembrane segment at 247 to 275 (VGLTSWGYSLLDIGAKYLFAALLLRWVAN) threads the bilayer. K262 is modified (N6-(retinylidene)lysine). At 276-297 (NERTIAVGQRSGRGAIGDPVED) the chain is on the cytoplasmic side.

The protein belongs to the archaeal/bacterial/fungal opsin family.

The protein resides in the cell membrane. Light-driven chloride pump. In Haloterrigena sp. (strain arg-4), this protein is Halorhodopsin (hop).